We begin with the raw amino-acid sequence, 479 residues long: Spindly-like protein spdl-1 (479 aa).

Coiled-coil stretches lie at residues 4–180 (DEEK…EGEL), 210–250 (EEDL…RFNV), and 321–357 (LMKDNEKYVTIIRGLQQEVENLKADIVQLQFDNKCAH).

Interacts with Zwilch homolog zwl-1, a component of the RZZ complex. Interacts with mdf-1 and mdf-2.

The protein resides in the chromosome. It is found in the centromere. Its subcellular location is the kinetochore. The protein localises to the cytoplasm. It localises to the cytoskeleton. The protein resides in the spindle pole. Transient kinetochore component required for chromosome and spindle pole alignment and chromosome segregation during mitosis. Functions downstream of the RZZ complex to mediate kinetochore-microtubule attachments and nuclear envelope breakdown during cell division. Required for kinetochore assembly and localizes the checkpoint proteins mdf-1 and mdf-2, dynein and dynactin to unattached kinetochores. Dynein is believed to control the initial lateral interaction between the kinetochore and spindle microtubules and to facilitate the subsequent formation of end-on kinetochore-microtubule attachments mediated by the NDC80 complex. Required for embryonic development. The chain is Spindly-like protein spdl-1 from Caenorhabditis elegans.